The primary structure comprises 89 residues: Putative membrane protein insertion efficiency factor (89 aa).

It belongs to the UPF0161 family.

Its subcellular location is the cell inner membrane. Could be involved in insertion of integral membrane proteins into the membrane. This is Putative membrane protein insertion efficiency factor from Petrotoga mobilis (strain DSM 10674 / SJ95).